The following is a 239-amino-acid chain: Phosphoribosylaminoimidazole-succinocarboxamide synthase (239 aa).

This sequence belongs to the SAICAR synthetase family.

It carries out the reaction 5-amino-1-(5-phospho-D-ribosyl)imidazole-4-carboxylate + L-aspartate + ATP = (2S)-2-[5-amino-1-(5-phospho-beta-D-ribosyl)imidazole-4-carboxamido]succinate + ADP + phosphate + 2 H(+). The protein operates within purine metabolism; IMP biosynthesis via de novo pathway; 5-amino-1-(5-phospho-D-ribosyl)imidazole-4-carboxamide from 5-amino-1-(5-phospho-D-ribosyl)imidazole-4-carboxylate: step 1/2. This chain is Phosphoribosylaminoimidazole-succinocarboxamide synthase, found in Nitratiruptor sp. (strain SB155-2).